The following is a 133-amino-acid chain: Nucleoid-associated protein Mb3743c (133 aa).

A disordered region spans residues 98–133 (GAMRPPAPPAAPPGAPGMPGMPGMPGAPGAPPVPGI). Positions 102–113 (PPAPPAAPPGAP) are enriched in pro residues.

It belongs to the YbaB/EbfC family. As to quaternary structure, homodimer.

The protein resides in the cytoplasm. Its subcellular location is the nucleoid. Functionally, binds to DNA and alters its conformation. May be involved in regulation of gene expression, nucleoid organization and DNA protection. The sequence is that of Nucleoid-associated protein Mb3743c from Mycobacterium bovis (strain ATCC BAA-935 / AF2122/97).